The following is a 251-amino-acid chain: Imidazole glycerol phosphate synthase subunit HisF (251 aa).

Active-site residues include Asp-11 and Asp-130.

Belongs to the HisA/HisF family. As to quaternary structure, heterodimer of HisH and HisF.

It is found in the cytoplasm. The catalysed reaction is 5-[(5-phospho-1-deoxy-D-ribulos-1-ylimino)methylamino]-1-(5-phospho-beta-D-ribosyl)imidazole-4-carboxamide + L-glutamine = D-erythro-1-(imidazol-4-yl)glycerol 3-phosphate + 5-amino-1-(5-phospho-beta-D-ribosyl)imidazole-4-carboxamide + L-glutamate + H(+). The protein operates within amino-acid biosynthesis; L-histidine biosynthesis; L-histidine from 5-phospho-alpha-D-ribose 1-diphosphate: step 5/9. In terms of biological role, IGPS catalyzes the conversion of PRFAR and glutamine to IGP, AICAR and glutamate. The HisF subunit catalyzes the cyclization activity that produces IGP and AICAR from PRFAR using the ammonia provided by the HisH subunit. This is Imidazole glycerol phosphate synthase subunit HisF from Pelagibacter ubique (strain HTCC1062).